The primary structure comprises 307 residues: Cytochrome c1, heme protein, mitochondrial (307 aa).

Residues 1-56 (MFQFVKKKNEFLKFARLGSRAFTQNAQKTHSKGSNIALVSSSLLSVGMIALYYNVY) constitute a mitochondrion transit peptide. The Mitochondrial intermembrane segment spans residues 57-269 (GPSLSAGTPK…EPELDIRKKM (213 aa)). Residues 89–259 (ASLRRGFQVY…DVVNFLHWAS (171 aa)) form the Cytochrome c domain. Residues cysteine 102, cysteine 105, histidine 106, and methionine 225 each coordinate heme c. A helical transmembrane segment spans residues 270–287 (GFQVITVLTILTALSMWY). The Mitochondrial matrix segment spans residues 288–307 (KRFKWTPIKNRKIFYQRPIK).

The protein belongs to the cytochrome c family. In terms of assembly, component of the ubiquinol-cytochrome c oxidoreductase (cytochrome b-c1 complex, complex III, CIII), a multisubunit enzyme composed of 3 respiratory subunits cytochrome b, cytochrome c1 and Rieske protein, 2 core protein subunits, and additional low-molecular weight protein subunits. The complex exists as an obligatory dimer and forms supercomplexes (SCs) in the inner mitochondrial membrane with cytochrome c oxidase (complex IV, CIV). The cofactor is heme c.

The protein resides in the mitochondrion inner membrane. The enzyme catalyses a quinol + 2 Fe(III)-[cytochrome c](out) = a quinone + 2 Fe(II)-[cytochrome c](out) + 2 H(+)(out). Component of the ubiquinol-cytochrome c oxidoreductase, a multisubunit transmembrane complex that is part of the mitochondrial electron transport chain which drives oxidative phosphorylation. The respiratory chain contains 3 multisubunit complexes succinate dehydrogenase (complex II, CII), ubiquinol-cytochrome c oxidoreductase (cytochrome b-c1 complex, complex III, CIII) and cytochrome c oxidase (complex IV, CIV), that cooperate to transfer electrons derived from NADH and succinate to molecular oxygen, creating an electrochemical gradient over the inner membrane that drives transmembrane transport and the ATP synthase. The cytochrome b-c1 complex catalyzes electron transfer from ubiquinol to cytochrome c, linking this redox reaction to translocation of protons across the mitochondrial inner membrane, with protons being carried across the membrane as hydrogens on the quinol. In the process called Q cycle, 2 protons are consumed from the matrix, 4 protons are released into the intermembrane space and 2 electrons are passed to cytochrome c. Cytochrome c1 is a catalytic core subunit containing a c-type heme. It transfers electrons from the [2Fe-2S] iron-sulfur cluster of the Rieske protein to cytochrome c. The protein is Cytochrome c1, heme protein, mitochondrial (cyt1) of Schizosaccharomyces pombe (strain 972 / ATCC 24843) (Fission yeast).